Here is a 615-residue protein sequence, read N- to C-terminus: Vitamin B12 transporter BtuB (615 aa).

The first 20 residues, Met1–Ala20, serve as a signal peptide directing secretion. The TonB box signature appears at Asn26 to Asn33. Residues Pro38–Thr152 enclose the TBDR plug domain. Cyanocob(III)alamin is bound by residues Ser85, Asn92, and Ile110 to Ser111. One can recognise a TBDR beta-barrel domain in the interval Lys155–Phe615. Beta stranded transmembrane passes span Thr158–Gly165, Tyr169–Gln178, and Thr184–Thr195. Ca(2+)-binding residues include Asp199, Gln210, Asp212, and Asp214. The next 2 membrane-spanning stretches (beta stranded) occupy residues Phe216–Glu226 and Asp231–Asp247. Tyr248, Asp249, and Asp255 together coordinate Ca(2+). The next 14 membrane-spanning stretches (beta stranded) occupy residues Arg257–Gln271, Gly273–Asp290, Thr303–Gln319, Ala322–Trp331, Glu347–Ala363, Ile365–Asp375, Phe379–Ile394, Tyr397–Asn411, Glu429–Glu438, Val444–Asn453, Val468–Phe486, Pro490–Ala505, Arg513–Trp525, and Asp531–Asp546. Thr303 contributes to the cyanocob(III)alamin binding site. Residue Arg513 participates in cyanocob(III)alamin binding. Tyr547 serves as a coordination point for cyanocob(III)alamin. Beta stranded transmembrane passes span Thr559 to Ser573, Ile586 to Ala597, and Ala603 to Phe615. Residues Tyr598–Phe615 carry the TonB C-terminal box motif.

This sequence belongs to the TonB-dependent receptor family. BtuB (TC 1.B.14.3.1) subfamily.

The protein resides in the cell outer membrane. Functionally, involved in the active translocation of vitamin B12 (cyanocobalamin) across the outer membrane to the periplasmic space. It derives its energy for transport by interacting with the trans-periplasmic membrane protein TonB. The protein is Vitamin B12 transporter BtuB of Pectobacterium atrosepticum (strain SCRI 1043 / ATCC BAA-672) (Erwinia carotovora subsp. atroseptica).